Consider the following 319-residue polypeptide: Phospho-N-acetylmuramoyl-pentapeptide-transferase (319 aa).

Helical transmembrane passes span 5–25, 51–71, 79–99, 119–139, 149–169, 173–193, 197–217, 224–246, and 299–319; these read LIAF…LIIW, TMGG…ICAY, VWIL…DDGL, LLVA…FALY, VVLF…AVNL, LDGL…WLAF, NFGV…FFMF, IFMG…IFLG, and VDLV…MIWG.

This sequence belongs to the glycosyltransferase 4 family. MraY subfamily. It depends on Mg(2+) as a cofactor.

The protein localises to the cell membrane. It catalyses the reaction UDP-N-acetyl-alpha-D-muramoyl-L-alanyl-gamma-D-glutamyl-L-lysyl-D-alanyl-D-alanine + di-trans,octa-cis-undecaprenyl phosphate = Mur2Ac(oyl-L-Ala-gamma-D-Glu-L-Lys-D-Ala-D-Ala)-di-trans,octa-cis-undecaprenyl diphosphate + UMP. It functions in the pathway cell wall biogenesis; peptidoglycan biosynthesis. Its function is as follows. Catalyzes the initial step of the lipid cycle reactions in the biosynthesis of the cell wall peptidoglycan: transfers peptidoglycan precursor phospho-MurNAc-pentapeptide from UDP-MurNAc-pentapeptide onto the lipid carrier undecaprenyl phosphate, yielding undecaprenyl-pyrophosphoryl-MurNAc-pentapeptide, known as lipid I. This chain is Phospho-N-acetylmuramoyl-pentapeptide-transferase, found in Lactobacillus delbrueckii subsp. bulgaricus (strain ATCC BAA-365 / Lb-18).